Consider the following 363-residue polypeptide: Crh-like protein 3 (363 aa).

Positions 1-19 (MSLLYLVALFVASICSVTA) are cleaved as a signal peptide. Cys-25 and Cys-32 are oxidised to a cystine. One can recognise a GH16 domain in the interval 26 to 237 (NPLTTTCPPD…YSKAPFTMVL (212 aa)). Asn-41, Asn-47, and Asn-56 each carry an N-linked (GlcNAc...) asparagine glycan. The Nucleophile role is filled by Glu-118. The active-site Proton donor is the Glu-122. Residue Glu-122 coordinates chitin. N-linked (GlcNAc...) asparagine glycosylation is found at Asn-127, Asn-141, and Asn-161. 3 residues coordinate chitin: Arg-203, Trp-207, and Thr-218. 2 N-linked (GlcNAc...) asparagine glycosylation sites follow: Asn-252 and Asn-269. Residues 298–318 (VYIGAGCVGAALLAGFIFFFI) form a helical membrane-spanning segment.

This sequence belongs to the glycosyl hydrolase 16 family. CRH1 subfamily. In terms of processing, the GPI-like anchor contains a phosphoceramide lipid group. The anchor position has not been determined.

The protein localises to the cell membrane. It is found in the secreted. It localises to the cell wall. It catalyses the reaction Random endo-hydrolysis of N-acetyl-beta-D-glucosaminide (1-&gt;4)-beta-linkages in chitin and chitodextrins.. Functionally, dual chitinase/transglycosylase that plays a role in cell wall architecture. Chitinase and transglycosylase activities are coupled. Required for the polysaccharide cross-linking at the septa and the cell wall. More specifically, transfers chitin to 1,6-beta-glucan in the cell wall. The polypeptide is Crh-like protein 3 (Aspergillus fumigatus (strain ATCC MYA-4609 / CBS 101355 / FGSC A1100 / Af293) (Neosartorya fumigata)).